The following is a 245-amino-acid chain: Putative binding protein HI_1525 (245 aa).

An N-terminal signal peptide occupies residues 1–19; that stretch reads MKKLVAVTSMILTTFSVQA. 2 residues coordinate molybdate: serine 56 and valine 163.

Belongs to the bacterial solute-binding protein ModA family.

It is found in the periplasm. Probably involved in the binding-dependent system. This Haemophilus influenzae (strain ATCC 51907 / DSM 11121 / KW20 / Rd) protein is Putative binding protein HI_1525.